Here is a 483-residue protein sequence, read N- to C-terminus: 2-methylcitrate dehydratase (483 aa).

The protein belongs to the PrpD family. In terms of assembly, monomer.

The catalysed reaction is (2S,3S)-2-methylcitrate = 2-methyl-cis-aconitate + H2O. The enzyme catalyses citrate = D-threo-isocitrate. It functions in the pathway organic acid metabolism; propanoate degradation. Its pathway is carbohydrate metabolism; tricarboxylic acid cycle; isocitrate from oxaloacetate: step 2/2. Functionally, involved in the catabolism of short chain fatty acids (SCFA) via the tricarboxylic acid (TCA)(acetyl degradation route) and via the 2-methylcitrate cycle I (propionate degradation route). Catalyzes the dehydration of 2-methylcitrate (2-MC) to yield the cis isomer of 2-methyl-aconitate. It is also able to catalyze the dehydration of citrate and the hydration of cis-aconitate at a lower rate. Due to its broad substrate specificity, it seems to be responsible for the residual aconitase activity of the acnAB-null mutant. The sequence is that of 2-methylcitrate dehydratase from Escherichia coli (strain K12).